The following is a 322-amino-acid chain: Cyclin mcs2 (322 aa).

S310 is modified (phosphoserine).

The protein belongs to the cyclin family. Cyclin C subfamily. In terms of assembly, one of the nine subunits forming the core-TFIIH basal transcription factor. Interacts with crk1 and skp1.

It localises to the nucleus. In terms of biological role, essential for progression through the cell cycle. Possesses kinase activity that can be detected when myelin basic protein (MBP) is provided as an exogenous substrate. This chain is Cyclin mcs2 (mcs2), found in Schizosaccharomyces pombe (strain 972 / ATCC 24843) (Fission yeast).